Reading from the N-terminus, the 200-residue chain is NADH-quinone oxidoreductase subunit C (200 aa).

It belongs to the complex I 30 kDa subunit family. NDH-1 is composed of 14 different subunits. Subunits NuoB, C, D, E, F, and G constitute the peripheral sector of the complex.

Its subcellular location is the cell inner membrane. It catalyses the reaction a quinone + NADH + 5 H(+)(in) = a quinol + NAD(+) + 4 H(+)(out). Its function is as follows. NDH-1 shuttles electrons from NADH, via FMN and iron-sulfur (Fe-S) centers, to quinones in the respiratory chain. The immediate electron acceptor for the enzyme in this species is believed to be ubiquinone. Couples the redox reaction to proton translocation (for every two electrons transferred, four hydrogen ions are translocated across the cytoplasmic membrane), and thus conserves the redox energy in a proton gradient. The sequence is that of NADH-quinone oxidoreductase subunit C from Maricaulis maris (strain MCS10) (Caulobacter maris).